We begin with the raw amino-acid sequence, 156 residues long: Small ribosomal subunit protein uS7 (156 aa).

It belongs to the universal ribosomal protein uS7 family. As to quaternary structure, part of the 30S ribosomal subunit. Contacts proteins S9 and S11.

In terms of biological role, one of the primary rRNA binding proteins, it binds directly to 16S rRNA where it nucleates assembly of the head domain of the 30S subunit. Is located at the subunit interface close to the decoding center, probably blocks exit of the E-site tRNA. In Mesomycoplasma hyopneumoniae (strain 232) (Mycoplasma hyopneumoniae), this protein is Small ribosomal subunit protein uS7.